The chain runs to 310 residues: Ribosomal RNA small subunit methyltransferase H (310 aa).

S-adenosyl-L-methionine contacts are provided by residues 32-34 (GGH), Asp52, Ala83, Asp100, and Gln107.

Belongs to the methyltransferase superfamily. RsmH family.

The protein resides in the cytoplasm. It carries out the reaction cytidine(1402) in 16S rRNA + S-adenosyl-L-methionine = N(4)-methylcytidine(1402) in 16S rRNA + S-adenosyl-L-homocysteine + H(+). Functionally, specifically methylates the N4 position of cytidine in position 1402 (C1402) of 16S rRNA. This is Ribosomal RNA small subunit methyltransferase H from Geobacillus sp. (strain WCH70).